The primary structure comprises 153 residues: Pheromone-binding protein Gp-9 (153 aa).

The signal sequence occupies residues 1–19 (MKTFVLHIFIFALVAFASA). 3 disulfides stabilise this stretch: Cys37/Cys77, Cys73/Cys129, and Cys118/Cys138.

It belongs to the PBP/GOBP family. Homodimer.

The protein localises to the secreted. Colony queen number, a major feature of social organization, is associated with worker genotype for Gp-9. Colonies are headed by either a single reproductive queen (monogyne form) or multiple queens (polygyne form). Differences in worker Gp-9 genotypes between social forms may cause differences in workers' abilities to recognize queens and regulate their numbers. The chain is Pheromone-binding protein Gp-9 from Solenopsis pusillignis (Fire ant).